A 745-amino-acid polypeptide reads, in one-letter code: 5-methyltetrahydropteroyltriglutamate--homocysteine methyltransferase (745 aa).

5-methyltetrahydropteroyltri-L-glutamate contacts are provided by residues 19–22 (RELK) and lysine 119. L-homocysteine is bound by residues 418 to 420 (IGS) and glutamate 471. Residues 418 to 420 (IGS) and glutamate 471 each bind L-methionine. Residues 502–503 (RC) and tryptophan 548 contribute to the 5-methyltetrahydropteroyltri-L-glutamate site. Position 586 (aspartate 586) interacts with L-homocysteine. L-methionine is bound at residue aspartate 586. Glutamate 592 is a binding site for 5-methyltetrahydropteroyltri-L-glutamate. 3 residues coordinate Zn(2+): histidine 628, cysteine 630, and glutamate 652. Catalysis depends on histidine 681, which acts as the Proton donor. Zn(2+) is bound at residue cysteine 713.

This sequence belongs to the vitamin-B12 independent methionine synthase family. The cofactor is Zn(2+).

The catalysed reaction is 5-methyltetrahydropteroyltri-L-glutamate + L-homocysteine = tetrahydropteroyltri-L-glutamate + L-methionine. It participates in amino-acid biosynthesis; L-methionine biosynthesis via de novo pathway; L-methionine from L-homocysteine (MetE route): step 1/1. Functionally, catalyzes the transfer of a methyl group from 5-methyltetrahydrofolate to homocysteine resulting in methionine formation. The chain is 5-methyltetrahydropteroyltriglutamate--homocysteine methyltransferase from Corynebacterium glutamicum (strain ATCC 13032 / DSM 20300 / JCM 1318 / BCRC 11384 / CCUG 27702 / LMG 3730 / NBRC 12168 / NCIMB 10025 / NRRL B-2784 / 534).